Here is a 250-residue protein sequence, read N- to C-terminus: Triosephosphate isomerase (250 aa).

9–11 is a substrate binding site; that stretch reads NWK. The active-site Electrophile is His95. The active-site Proton acceptor is Glu167. Residues Gly173, Ser213, and 234-235 each bind substrate; that span reads GG.

Belongs to the triosephosphate isomerase family. In terms of assembly, homodimer.

It localises to the cytoplasm. It catalyses the reaction D-glyceraldehyde 3-phosphate = dihydroxyacetone phosphate. Its pathway is carbohydrate biosynthesis; gluconeogenesis. It participates in carbohydrate degradation; glycolysis; D-glyceraldehyde 3-phosphate from glycerone phosphate: step 1/1. Functionally, involved in the gluconeogenesis. Catalyzes stereospecifically the conversion of dihydroxyacetone phosphate (DHAP) to D-glyceraldehyde-3-phosphate (G3P). The sequence is that of Triosephosphate isomerase from Flavobacterium psychrophilum (strain ATCC 49511 / DSM 21280 / CIP 103535 / JIP02/86).